A 134-amino-acid chain; its full sequence is Cytochrome c-type biogenesis protein CcmE (134 aa).

Over 1 to 7 (MKRKYRR) the chain is Cytoplasmic. Residues 8-28 (LFVVIITLSIFAGSVVLVLGK) traverse the membrane as a helical; Signal-anchor for type II membrane protein segment. Residues 29–134 (LKNNVSFFYT…MPNKYKTNDL (106 aa)) are Periplasmic-facing. Positions 120 and 124 each coordinate heme.

The protein belongs to the CcmE/CycJ family.

The protein resides in the cell inner membrane. Heme chaperone required for the biogenesis of c-type cytochromes. Transiently binds heme delivered by CcmC and transfers the heme to apo-cytochromes in a process facilitated by CcmF and CcmH. This Ehrlichia ruminantium (strain Welgevonden) protein is Cytochrome c-type biogenesis protein CcmE.